The chain runs to 862 residues: DNA topoisomerase 3-beta-1 (862 aa).

A Toprim domain is found at 3–153; the sequence is TVLMVAEKPS…EKTVFRARFS (151 aa). Positions 171 to 593 constitute a Topo IA-type catalytic domain; the sequence is DHNEALSVDA…HTLDVFKRKF (423 aa). The O-(5'-phospho-DNA)-tyrosine intermediate role is filled by tyrosine 336. A compositionally biased stretch (basic residues) spans 821–851; sequence PMHRGGPGRRQGRGRGRARRPPGKPNPRRPK. Positions 821 to 854 are disordered; it reads PMHRGGPGRRQGRGRGRARRPPGKPNPRRPKDKM.

It belongs to the type IA topoisomerase family. In terms of tissue distribution, isoform 1 is found in testis, heart and skeletal muscle. A 4 kb transcript which probably represents isoform 2 is found in thymus, kidney and pancreas.

The enzyme catalyses ATP-independent breakage of single-stranded DNA, followed by passage and rejoining.. In terms of biological role, releases the supercoiling and torsional tension of DNA introduced during the DNA replication and transcription by transiently cleaving and rejoining one strand of the DNA duplex. Introduces a single-strand break via transesterification at a target site in duplex DNA. The scissile phosphodiester is attacked by the catalytic tyrosine of the enzyme, resulting in the formation of a DNA-(5'-phosphotyrosyl)-enzyme intermediate and the expulsion of a 3'-OH DNA strand. The free DNA strand than undergoes passage around the unbroken strand thus removing DNA supercoils. Finally, in the religation step, the DNA 3'-OH attacks the covalent intermediate to expel the active-site tyrosine and restore the DNA phosphodiester backbone. Possesses negatively supercoiled DNA relaxing activity. The polypeptide is DNA topoisomerase 3-beta-1 (TOP3B) (Homo sapiens (Human)).